A 439-amino-acid chain; its full sequence is Histidinol dehydrogenase (439 aa).

Tyrosine 132, glutamine 194, and asparagine 217 together coordinate NAD(+). The substrate site is built by serine 244, glutamine 266, and histidine 269. Zn(2+) contacts are provided by glutamine 266 and histidine 269. Active-site proton acceptor residues include glutamate 335 and histidine 336. Residues histidine 336, aspartate 369, glutamate 423, and histidine 428 each contribute to the substrate site. Aspartate 369 contacts Zn(2+). Histidine 428 is a Zn(2+) binding site.

It belongs to the histidinol dehydrogenase family. It depends on Zn(2+) as a cofactor.

It carries out the reaction L-histidinol + 2 NAD(+) + H2O = L-histidine + 2 NADH + 3 H(+). It participates in amino-acid biosynthesis; L-histidine biosynthesis; L-histidine from 5-phospho-alpha-D-ribose 1-diphosphate: step 9/9. Its function is as follows. Catalyzes the sequential NAD-dependent oxidations of L-histidinol to L-histidinaldehyde and then to L-histidine. This chain is Histidinol dehydrogenase (his2), found in Schizosaccharomyces pombe (strain 972 / ATCC 24843) (Fission yeast).